Reading from the N-terminus, the 206-residue chain is Cytochrome b6-f complex iron-sulfur subunit, chloroplastic (206 aa).

The N-terminal 29 residues, 1 to 29, are a transit peptide targeting the chloroplast; sequence MAMITSRRAAAPCKAQATRRSRVMSVVRA. A helical membrane pass occupies residues 48 to 68; that stretch reads ILLGGASLPVGSLALGYGAFF. Positions 92–188 constitute a Rieske domain; that stretch reads ANAWLATHQK…CDVQEDGLVT (97 aa). The [2Fe-2S] cluster site is built by Cys134, His136, Cys152, and His155. Cysteines 139 and 154 form a disulfide.

It belongs to the Rieske iron-sulfur protein family. As to quaternary structure, the 4 large subunits of the cytochrome b6-f complex are cytochrome b6, subunit IV (17 kDa polypeptide, petD), cytochrome f and the Rieske protein, while the 4 small subunits are petG, petL, petM and petN. The complex functions as a dimer. Requires [2Fe-2S] cluster as cofactor.

The protein resides in the plastid. Its subcellular location is the chloroplast thylakoid membrane. The catalysed reaction is 2 oxidized [plastocyanin] + a plastoquinol + 2 H(+)(in) = 2 reduced [plastocyanin] + a plastoquinone + 4 H(+)(out). Functionally, component of the cytochrome b6-f complex, which mediates electron transfer between photosystem II (PSII) and photosystem I (PSI), cyclic electron flow around PSI, and state transitions. This is Cytochrome b6-f complex iron-sulfur subunit, chloroplastic (petC) from Volvox carteri (Green alga).